A 127-amino-acid chain; its full sequence is I-Kappa-B like protein J1 (127 aa).

ANK repeat units follow at residues 43 to 76 and 81 to 111; these read HGNT…DLDE and DGDT…RFGS.

The protein belongs to the polydnaviridae I-Kappa-B-like protein family.

Its function is as follows. Suppresses the host immune response through NF-kappa-B inactivation. Possesses ankyrin repeat domains required for NF-kappa-B binding but lacks the regulatory regions required for dissociation from NF-kappa-B and degradation. Therefore, prevents host NF-kappa-B release and subsequent activation. The sequence is that of I-Kappa-B like protein J1 (J2) from Microplitis demolitor (Parasitoid wasp).